The chain runs to 248 residues: UPF0736 protein BCE_1296 (248 aa).

The protein belongs to the UPF0736 family.

In Bacillus cereus (strain ATCC 10987 / NRS 248), this protein is UPF0736 protein BCE_1296.